The sequence spans 351 residues: UPF0252 protein MJECL39 (351 aa).

2 consecutive transmembrane segments (helical) span residues 58–78 (FITF…VWLW) and 91–111 (IIIC…LCGV).

Belongs to the UPF0252 family.

Its subcellular location is the cell membrane. In Methanocaldococcus jannaschii (strain ATCC 43067 / DSM 2661 / JAL-1 / JCM 10045 / NBRC 100440) (Methanococcus jannaschii), this protein is UPF0252 protein MJECL39.